The primary structure comprises 334 residues: Mediator of RNA polymerase II transcription subunit 4 (334 aa).

A coiled-coil region spans residues 71-100; it reads QEREQLIRTLEAHVEKRDEVIQQLETNLKS. The segment at 193–334 is disordered; that stretch reads PLITSPSASS…ASKKTGSSNK (142 aa). Polar residues-rich tracts occupy residues 194–206 and 251–282; these read LITS…SNGG and NEKQ…SSPN.

This sequence belongs to the Mediator complex subunit 4 family. Component of the Mediator complex.

It is found in the nucleus. Its function is as follows. Component of the Mediator complex, a coactivator involved in the regulated transcription of nearly all RNA polymerase II-dependent genes. Mediator functions as a bridge to convey information from gene-specific regulatory proteins to the basal RNA polymerase II transcription machinery. Mediator is recruited to promoters by direct interactions with regulatory proteins and serves as a scaffold for the assembly of a functional preinitiation complex with RNA polymerase II and the general transcription factors. The protein is Mediator of RNA polymerase II transcription subunit 4 (mdt-4) of Caenorhabditis elegans.